The primary structure comprises 46 residues: U2-plectoxin-Pt1a (46 aa).

Post-translationally, contains 4 disulfide bonds. In terms of tissue distribution, expressed by the venom gland.

The protein localises to the secreted. Its function is as follows. Potent toxin that may paralyze and/or kill insect pests such as H.virescens (lepidoptera), S.exigua (beet armyworm) and M.sexta (tobacco hornworm). This Plectreurys tristis (Spider) protein is U2-plectoxin-Pt1a.